Here is a 430-residue protein sequence, read N- to C-terminus: Serine--tRNA ligase (430 aa).

237 to 239 is a binding site for L-serine; that stretch reads TAE. 268-270 contributes to the ATP binding site; sequence RSE. Residue E291 participates in L-serine binding. 355-358 provides a ligand contact to ATP; sequence EISS. S391 is a binding site for L-serine.

It belongs to the class-II aminoacyl-tRNA synthetase family. Type-1 seryl-tRNA synthetase subfamily. In terms of assembly, homodimer. The tRNA molecule binds across the dimer.

The protein resides in the cytoplasm. It catalyses the reaction tRNA(Ser) + L-serine + ATP = L-seryl-tRNA(Ser) + AMP + diphosphate + H(+). The enzyme catalyses tRNA(Sec) + L-serine + ATP = L-seryl-tRNA(Sec) + AMP + diphosphate + H(+). The protein operates within aminoacyl-tRNA biosynthesis; selenocysteinyl-tRNA(Sec) biosynthesis; L-seryl-tRNA(Sec) from L-serine and tRNA(Sec): step 1/1. Functionally, catalyzes the attachment of serine to tRNA(Ser). Is also able to aminoacylate tRNA(Sec) with serine, to form the misacylated tRNA L-seryl-tRNA(Sec), which will be further converted into selenocysteinyl-tRNA(Sec). The chain is Serine--tRNA ligase from Enterobacter sp. (strain 638).